The chain runs to 160 residues: Nucleotide-binding protein CJA_2652 (160 aa).

This sequence belongs to the YajQ family.

In terms of biological role, nucleotide-binding protein. This is Nucleotide-binding protein CJA_2652 from Cellvibrio japonicus (strain Ueda107) (Pseudomonas fluorescens subsp. cellulosa).